Reading from the N-terminus, the 566-residue chain is Malate synthase, glyoxysomal (566 aa).

The active-site Proton acceptor is the arginine 182. Aspartate 467 (proton donor) is an active-site residue. The Microbody targeting signal signature appears at 564–566; that stretch reads SRL.

This sequence belongs to the malate synthase family.

It localises to the glyoxysome. It carries out the reaction glyoxylate + acetyl-CoA + H2O = (S)-malate + CoA + H(+). It participates in carbohydrate metabolism; glyoxylate cycle; (S)-malate from isocitrate: step 2/2. This is Malate synthase, glyoxysomal from Cucurbita maxima (Pumpkin).